The sequence spans 838 residues: Adenylate cyclase (838 aa).

Residues 1–541 are catalytic; the sequence is MNYDLFSAQK…DLRLSFPVTV (541 aa). The regulatory stretch occupies residues 547 to 838; sequence EDLTHACEIR…VPFHSRLAMS (292 aa).

The protein belongs to the adenylyl cyclase class-1 family.

Its subcellular location is the cytoplasm. It catalyses the reaction ATP = 3',5'-cyclic AMP + diphosphate. The chain is Adenylate cyclase (cya) from Pasteurella multocida (strain Pm70).